The chain runs to 146 residues: Probable acetyltransferase HI_0677 (146 aa).

The N-acetyltransferase domain maps to 1-146 (MKLFKAEQWN…ERLFELSLSC (146 aa)).

In Haemophilus influenzae (strain ATCC 51907 / DSM 11121 / KW20 / Rd), this protein is Probable acetyltransferase HI_0677.